A 295-amino-acid chain; its full sequence is Trimeric intracellular cation channel type A (295 aa).

Residues 1–11 (MELLSALSLDD) lie on the Lumenal side of the membrane. Residues 12 to 32 (LAVAFSKLPVFPLFDVAYYII) form a helical membrane-spanning segment. At 33–51 (SILYLKYEPGAVDLSKRSP) the chain is on the cytoplasmic side. A helical membrane pass occupies residues 52–72 (VASWLCAMLYCFGSYILADVL). The Lumenal segment spans residues 73–84 (LGESPIHYFSNN). Gly-74 provides a ligand contact to Ca(2+). A helical membrane pass occupies residues 85-105 (ANILLASAVWYLTFFCPLNIF). Topologically, residues 106-144 (YKIVSFLPLKLVLVGMKEVVRVRKIAMGIHHAHHHYHHG) are cytoplasmic. A 1,2-diacyl-sn-glycero-3-phospho-(1D-myo-inositol-4,5-bisphosphate) contacts are provided by Lys-122 and Arg-126. A helical membrane pass occupies residues 145–165 (WVIMVLIGWVKGSGVALMSNL). Residues 166-178 (EQLLRGVWKPETN) lie on the Lumenal side of the membrane. The helical transmembrane segment at 179–199 (EILHMSFPTKASLYGAILFTL) threads the bilayer. Residues 200–201 (QQ) lie on the Cytoplasmic side of the membrane. Residues 202-222 (AHWLPISKAYLIFFFTLFMAI) traverse the membrane as a helical segment. Over 223–233 (CKIYMTATHSH) the chain is Lumenal. A helical membrane pass occupies residues 234 to 254 (GSPFAIFESGICCVLFGAANG). Residues 255–295 (DHDDHGDHHHHHDDHDVSHSTVKSKEELNEGTRKRKTKKAE) are Cytoplasmic-facing. The segment covering 259–286 (HGDHHHHHDDHDVSHSTVKSKEELNEGT) has biased composition (basic and acidic residues). The interval 259–295 (HGDHHHHHDDHDVSHSTVKSKEELNEGTRKRKTKKAE) is disordered.

This sequence belongs to the TMEM38 family. As to quaternary structure, homotrimer; conformation seems to be controled by binding to diacylglycerol (DAG).

The protein localises to the sarcoplasmic reticulum membrane. Its subcellular location is the nucleus membrane. It carries out the reaction K(+)(in) = K(+)(out). Its activity is regulated as follows. Channel activity is activated by a change of voltage within the sarcoplasmic reticulum lumen and blocked by luminal high Ca(2+) levels. Intracellular monovalent cation channel required for maintenance of rapid intracellular calcium release. Acts as a potassium counter-ion channel that functions in synchronization with calcium release from intracellular stores. Opened by a change of voltage within the sarcoplasmic reticulum lumen. The sequence is that of Trimeric intracellular cation channel type A (tmem38a) from Xenopus tropicalis (Western clawed frog).